The chain runs to 525 residues: uncharacterized protein (525 aa).

2 stretches are compositionally biased toward polar residues: residues 139-149 and 336-349; these read LNSTPDKTQAG and SGKT…HTTS. Disordered stretches follow at residues 139-158 and 330-356; these read LNST…HQAP and PAPA…PYAT.

This is an uncharacterized protein from Treponema pallidum (strain Nichols).